A 600-amino-acid chain; its full sequence is Elongation factor 4 (600 aa).

One can recognise a tr-type G domain in the interval 4–186 (SKIRNFSIIA…AIVEKIPSPS (183 aa)). Residues 16 to 21 (DHGKST) and 133 to 136 (NKID) each bind GTP.

Belongs to the TRAFAC class translation factor GTPase superfamily. Classic translation factor GTPase family. LepA subfamily.

The protein resides in the cell membrane. It carries out the reaction GTP + H2O = GDP + phosphate + H(+). In terms of biological role, required for accurate and efficient protein synthesis under certain stress conditions. May act as a fidelity factor of the translation reaction, by catalyzing a one-codon backward translocation of tRNAs on improperly translocated ribosomes. Back-translocation proceeds from a post-translocation (POST) complex to a pre-translocation (PRE) complex, thus giving elongation factor G a second chance to translocate the tRNAs correctly. Binds to ribosomes in a GTP-dependent manner. In Mycoplasma mycoides subsp. mycoides SC (strain CCUG 32753 / NCTC 10114 / PG1), this protein is Elongation factor 4.